Consider the following 206-residue polypeptide: Adenylate kinase (206 aa).

The tract at residues 1–21 (MSQPKILLLGAPGAGKGTQSS) is disordered. An ATP-binding site is contributed by 13 to 18 (GAGKGT). The NMP stretch occupies residues 33 to 61 (TTGDALRANKDMETEHGTPREFMEAGELV). Residues threonine 34, arginine 39, 59 to 61 (ELV), 84 to 87 (GYPR), and glutamine 91 each bind AMP. Positions 120–153 (GRRMDPETGDIYHTEFNMPDDEEVRERLVQRDDD) are LID. ATP-binding positions include arginine 121 and 130–131 (IY). Arginine 150 and arginine 161 together coordinate AMP. Alanine 189 provides a ligand contact to ATP.

Belongs to the adenylate kinase family. As to quaternary structure, monomer.

The protein localises to the cytoplasm. The catalysed reaction is AMP + ATP = 2 ADP. It functions in the pathway purine metabolism; AMP biosynthesis via salvage pathway; AMP from ADP: step 1/1. Catalyzes the reversible transfer of the terminal phosphate group between ATP and AMP. Plays an important role in cellular energy homeostasis and in adenine nucleotide metabolism. In Natronomonas pharaonis (strain ATCC 35678 / DSM 2160 / CIP 103997 / JCM 8858 / NBRC 14720 / NCIMB 2260 / Gabara) (Halobacterium pharaonis), this protein is Adenylate kinase.